The following is a 287-amino-acid chain: Carbon monoxide dehydrogenase medium chain (287 aa).

An FAD-binding PCMH-type domain is found at 1–177; that stretch reads MIPPRFEYHA…VEIRVPAFAQ (177 aa). FAD contacts are provided by residues 32 to 36 and 111 to 115; these read AGGHS and TIGGD.

As to quaternary structure, dimer of heterotrimers. Each heterotrimer consists of a large, a medium and a small subunit. FAD is required as a cofactor.

It carries out the reaction CO + a quinone + H2O = a quinol + CO2. In terms of biological role, catalyzes the oxidation of carbon monoxide to carbon dioxide. In Hydrogenophaga pseudoflava (Pseudomonas carboxydoflava), this protein is Carbon monoxide dehydrogenase medium chain (cutM).